The primary structure comprises 49 residues: uncharacterized protein (49 aa).

The protein belongs to the metallo-dependent hydrolases superfamily. TatD-type hydrolase family. Requires a divalent metal cation as cofactor.

This is an uncharacterized protein from Geobacillus stearothermophilus (Bacillus stearothermophilus).